The following is a 391-amino-acid chain: Ammonium transporter Amt1 (391 aa).

10 consecutive transmembrane segments (helical) span residues 12–32 (VFFFMWAASLIFFMKAGFIAL), 51–71 (LDLAAVFIAYLFIGYGISYGF), 88–108 (AWWMKMVMFAAAAVTIITGGV), 112–132 (IKILPYFIGALIVGGILYPIV), 152–172 (AGSGAVHLFGGLVGLMAAYVL), 192–212 (IPIAVLGAFILAFGWYGFNIG), 223–243 (LASVAMATTMALAGGIIGGAL), 261–281 (VAVCSGVDLFTPIGAFIVGLL), 305–325 (IGPVHAMSGLIGVICAGIPFL), and 338–358 (GQIIGAIVIALIAIVGGLIIY).

The protein belongs to the ammonia transporter channel (TC 1.A.11.2) family. In terms of assembly, homotrimer. Interacts and forms a complex with GlnK1.

The protein resides in the cell membrane. Its activity is regulated as follows. Activity is regulated by the nitrogen regulatory protein GlnK1 via direct interaction. Formation of the GlnK1/Amt1 complex is decreased in the presence of Mg-ATP or 2-oxoglutarate. The presence of both effectors abolishes the formation of the complex. Its function is as follows. Involved in the uptake of ammonium/ammonia (NH(4)(+)/NH(3)). Transport is electrogenic. In Methanocaldococcus jannaschii (strain ATCC 43067 / DSM 2661 / JAL-1 / JCM 10045 / NBRC 100440) (Methanococcus jannaschii), this protein is Ammonium transporter Amt1.